A 289-amino-acid chain; its full sequence is Elongation factor Ts (289 aa).

Positions 82–85 (TDFL) are involved in Mg(2+) ion dislocation from EF-Tu.

Belongs to the EF-Ts family.

The protein localises to the cytoplasm. Associates with the EF-Tu.GDP complex and induces the exchange of GDP to GTP. It remains bound to the aminoacyl-tRNA.EF-Tu.GTP complex up to the GTP hydrolysis stage on the ribosome. This chain is Elongation factor Ts, found in Pseudomonas paraeruginosa (strain DSM 24068 / PA7) (Pseudomonas aeruginosa (strain PA7)).